We begin with the raw amino-acid sequence, 154 residues long: Protein FAM162A (154 aa).

The interval Arg-76–Lys-102 is required for proapoptotic activity. A helical transmembrane segment spans residues Ile-103–Ile-120.

Belongs to the UPF0389 family. Interacts with HSP90AB1; HSP90AB1 is essential for FAM162A mitochondrial localization and pro-apoptotic activity. Interacts with VDAC2; the interaction is probably involved in inducing mitochondrial permeability transition.

Its subcellular location is the mitochondrion membrane. In terms of biological role, proposed to be involved in regulation of apoptosis; the exact mechanism may differ between cell types/tissues. May be involved in hypoxia-induced cell death of transformed cells implicating cytochrome C release and caspase activation (such as CASP9) and inducing mitochondrial permeability transition. May be involved in hypoxia-induced cell death of neuronal cells probably by promoting release of AIFM1 from mitochondria to cytoplasm and its translocation to the nucleus; however, the involvement of caspases has been reported conflictingly. In Homo sapiens (Human), this protein is Protein FAM162A (FAM162A).